Reading from the N-terminus, the 732-residue chain is Trehalose phosphorylase (732 aa).

A propeptide spanning residues Met1–Ser25 is cleaved from the precursor.

Belongs to the glycosyltransferase group 1 family. Glycosyltransferase 4 subfamily. As to quaternary structure, homodimer.

It carries out the reaction alpha,alpha-trehalose + phosphate = alpha-D-glucose + alpha-D-glucose 1-phosphate. Activity abolished by 1 mM Cu(2+). 0.1 mM Cu(2+) reduces trehalose phosphorolysis to 76% and trehalose synthesis to 48% of maximum activity. 1 mM Zn(2+) abolishes trehalose synthesis, and reduces trehalose phosphorolysis to 40% of maximum activity. Unaffected by EDTA. Functionally, reversibly catalyzes the synthesis and degradation of trehalose from glucose and alpha-D-glucose 1-phosphate. The equilibrium lies in the direction of trehalose synthesis. The polypeptide is Trehalose phosphorylase (Grifola frondosa (Maitake)).